Here is an 80-residue protein sequence, read N- to C-terminus: uncharacterized protein (80 aa).

This is an uncharacterized protein from Bacillus subtilis (strain 168).